Here is a 368-residue protein sequence, read N- to C-terminus: 1-deoxy-D-xylulose 5-phosphate reductoisomerase (368 aa).

NADPH-binding residues include T7, G8, S9, I10, G31, K32, N33, and N113. K114 lines the 1-deoxy-D-xylulose 5-phosphate pocket. Position 115 (E115) interacts with NADPH. D133 is a Mn(2+) binding site. 1-deoxy-D-xylulose 5-phosphate contacts are provided by S134, E135, S158, and H181. E135 serves as a coordination point for Mn(2+). G187 is a binding site for NADPH. 4 residues coordinate 1-deoxy-D-xylulose 5-phosphate: S194, N199, K200, and E203. Position 203 (E203) interacts with Mn(2+).

The protein belongs to the DXR family. It depends on Mg(2+) as a cofactor. Mn(2+) serves as cofactor.

The catalysed reaction is 2-C-methyl-D-erythritol 4-phosphate + NADP(+) = 1-deoxy-D-xylulose 5-phosphate + NADPH + H(+). It participates in isoprenoid biosynthesis; isopentenyl diphosphate biosynthesis via DXP pathway; isopentenyl diphosphate from 1-deoxy-D-xylulose 5-phosphate: step 1/6. Catalyzes the NADPH-dependent rearrangement and reduction of 1-deoxy-D-xylulose-5-phosphate (DXP) to 2-C-methyl-D-erythritol 4-phosphate (MEP). The polypeptide is 1-deoxy-D-xylulose 5-phosphate reductoisomerase (Helicobacter pylori (strain Shi470)).